The sequence spans 431 residues: GTPase Obg (431 aa).

The Obg domain maps to 1-158 (MFVDQVKINV…REIRLELKVL (158 aa)). A disordered region spans residues 125 to 145 (GNIHFASPKNPAPEIAENGEP). Positions 159–335 (ADVGLVGFPS…LLQRTADMLA (177 aa)) constitute an OBG-type G domain. Residues 165-172 (GFPSVGKS), 190-194 (FTTLV), 212-215 (DLPG), 282-285 (NKMD), and 316-318 (SAL) contribute to the GTP site. Mg(2+) contacts are provided by serine 172 and threonine 192. The OCT domain occupies 353 to 431 (YNFQPEAEFT…IDDFTFEYMA (79 aa)).

It belongs to the TRAFAC class OBG-HflX-like GTPase superfamily. OBG GTPase family. As to quaternary structure, monomer. Requires Mg(2+) as cofactor.

It localises to the cytoplasm. In terms of biological role, an essential GTPase which binds GTP, GDP and possibly (p)ppGpp with moderate affinity, with high nucleotide exchange rates and a fairly low GTP hydrolysis rate. Plays a role in control of the cell cycle, stress response, ribosome biogenesis and in those bacteria that undergo differentiation, in morphogenesis control. This chain is GTPase Obg, found in Levilactobacillus brevis (strain ATCC 367 / BCRC 12310 / CIP 105137 / JCM 1170 / LMG 11437 / NCIMB 947 / NCTC 947) (Lactobacillus brevis).